The chain runs to 276 residues: Large ribosomal subunit protein uL2 (276 aa).

Disordered stretches follow at residues 30–57 (EKSLTEKLSKKGGRNNQGRLTVRHQGGG) and 219–276 (TVRG…RSKK).

Belongs to the universal ribosomal protein uL2 family. Part of the 50S ribosomal subunit. Forms a bridge to the 30S subunit in the 70S ribosome.

Its function is as follows. One of the primary rRNA binding proteins. Required for association of the 30S and 50S subunits to form the 70S ribosome, for tRNA binding and peptide bond formation. It has been suggested to have peptidyltransferase activity; this is somewhat controversial. Makes several contacts with the 16S rRNA in the 70S ribosome. The chain is Large ribosomal subunit protein uL2 from Exiguobacterium sibiricum (strain DSM 17290 / CCUG 55495 / CIP 109462 / JCM 13490 / 255-15).